Here is a 449-residue protein sequence, read N- to C-terminus: Signal recognition particle protein (449 aa).

GTP-binding positions include 109–116, 191–195, and 249–252; these read GLQGSGKT, DTAGR, and SRID.

The protein belongs to the GTP-binding SRP family. SRP54 subfamily. As to quaternary structure, part of the signal recognition particle protein translocation system, which is composed of SRP and FtsY. SRP is a ribonucleoprotein composed of Ffh and a 4.5S RNA molecule.

Its subcellular location is the cytoplasm. It carries out the reaction GTP + H2O = GDP + phosphate + H(+). In terms of biological role, involved in targeting and insertion of nascent membrane proteins into the cytoplasmic membrane. Binds to the hydrophobic signal sequence of the ribosome-nascent chain (RNC) as it emerges from the ribosomes. The SRP-RNC complex is then targeted to the cytoplasmic membrane where it interacts with the SRP receptor FtsY. Interaction with FtsY leads to the transfer of the RNC complex to the Sec translocase for insertion into the membrane, the hydrolysis of GTP by both Ffh and FtsY, and the dissociation of the SRP-FtsY complex into the individual components. In Rickettsia felis (strain ATCC VR-1525 / URRWXCal2) (Rickettsia azadi), this protein is Signal recognition particle protein.